We begin with the raw amino-acid sequence, 373 residues long: Queuine tRNA-ribosyltransferase (373 aa).

Catalysis depends on aspartate 91, which acts as the Proton acceptor. Residues 91 to 95 (DSGGF), aspartate 145, and glutamine 187 contribute to the substrate site. Positions 245 to 251 (GVGTPED) are RNA binding. Residue aspartate 264 is the Nucleophile of the active site. An RNA binding; important for wobble base 34 recognition region spans residues 269–273 (TRNAR). 4 residues coordinate Zn(2+): cysteine 302, cysteine 304, cysteine 307, and histidine 333.

Belongs to the queuine tRNA-ribosyltransferase family. As to quaternary structure, homodimer. Within each dimer, one monomer is responsible for RNA recognition and catalysis, while the other monomer binds to the replacement base PreQ1. Zn(2+) is required as a cofactor.

The catalysed reaction is 7-aminomethyl-7-carbaguanine + guanosine(34) in tRNA = 7-aminomethyl-7-carbaguanosine(34) in tRNA + guanine. It participates in tRNA modification; tRNA-queuosine biosynthesis. Its function is as follows. Catalyzes the base-exchange of a guanine (G) residue with the queuine precursor 7-aminomethyl-7-deazaguanine (PreQ1) at position 34 (anticodon wobble position) in tRNAs with GU(N) anticodons (tRNA-Asp, -Asn, -His and -Tyr). Catalysis occurs through a double-displacement mechanism. The nucleophile active site attacks the C1' of nucleotide 34 to detach the guanine base from the RNA, forming a covalent enzyme-RNA intermediate. The proton acceptor active site deprotonates the incoming PreQ1, allowing a nucleophilic attack on the C1' of the ribose to form the product. After dissociation, two additional enzymatic reactions on the tRNA convert PreQ1 to queuine (Q), resulting in the hypermodified nucleoside queuosine (7-(((4,5-cis-dihydroxy-2-cyclopenten-1-yl)amino)methyl)-7-deazaguanosine). The protein is Queuine tRNA-ribosyltransferase of Syntrophobacter fumaroxidans (strain DSM 10017 / MPOB).